Here is a 422-residue protein sequence, read N- to C-terminus: L-2-hydroxyglutarate dehydrogenase (422 aa).

The protein belongs to the L2HGDH family. Requires FAD as cofactor.

Its subcellular location is the cell inner membrane. The catalysed reaction is (S)-2-hydroxyglutarate + a quinone = a quinol + 2-oxoglutarate. The protein operates within amino-acid degradation. Catalyzes the dehydrogenation of L-2-hydroxyglutarate (L2HG) to alpha-ketoglutarate and couples to the respiratory chain by feeding electrons from the reaction into the membrane quinone pool. Functions in a L-lysine degradation pathway that proceeds via cadaverine, glutarate and L-2-hydroxyglutarate. In Escherichia coli (strain K12), this protein is L-2-hydroxyglutarate dehydrogenase.